The primary structure comprises 513 residues: ATP synthase subunit alpha 1 (513 aa).

169 to 176 contributes to the ATP binding site; sequence GDRQTGKT.

Belongs to the ATPase alpha/beta chains family. F-type ATPases have 2 components, CF(1) - the catalytic core - and CF(0) - the membrane proton channel. CF(1) has five subunits: alpha(3), beta(3), gamma(1), delta(1), epsilon(1). CF(0) has three main subunits: a(1), b(2) and c(9-12). The alpha and beta chains form an alternating ring which encloses part of the gamma chain. CF(1) is attached to CF(0) by a central stalk formed by the gamma and epsilon chains, while a peripheral stalk is formed by the delta and b chains.

The protein resides in the cell inner membrane. The enzyme catalyses ATP + H2O + 4 H(+)(in) = ADP + phosphate + 5 H(+)(out). Its function is as follows. Produces ATP from ADP in the presence of a proton gradient across the membrane. The alpha chain is a regulatory subunit. The sequence is that of ATP synthase subunit alpha 1 from Nitrosomonas eutropha (strain DSM 101675 / C91 / Nm57).